The following is a 401-amino-acid chain: Argininosuccinate synthase (401 aa).

8–16 (AYSGGLDTT) lines the ATP pocket. Residue Y87 participates in L-citrulline binding. G117 contacts ATP. L-aspartate is bound by residues T119, N123, and D124. N123 lines the L-citrulline pocket. The L-citrulline site is built by R127, S175, E259, and Y271.

This sequence belongs to the argininosuccinate synthase family. Type 1 subfamily. Homotetramer.

Its subcellular location is the cytoplasm. The enzyme catalyses L-citrulline + L-aspartate + ATP = 2-(N(omega)-L-arginino)succinate + AMP + diphosphate + H(+). Its pathway is amino-acid biosynthesis; L-arginine biosynthesis; L-arginine from L-ornithine and carbamoyl phosphate: step 2/3. The protein is Argininosuccinate synthase of Corynebacterium glutamicum (strain ATCC 13032 / DSM 20300 / JCM 1318 / BCRC 11384 / CCUG 27702 / LMG 3730 / NBRC 12168 / NCIMB 10025 / NRRL B-2784 / 534).